The chain runs to 429 residues: Prenyltransferase okaC (429 aa).

Residues Arg101, Lys189, Tyr191, Lys257, Tyr259, Tyr342, Tyr406, and Tyr410 each coordinate dimethylallyl diphosphate.

The protein belongs to the tryptophan dimethylallyltransferase family.

The catalysed reaction is cyclo(L-Trp-L-Trp) + 2 dimethylallyl diphosphate = cyclo(N(8)-(alpha,alpha-dimethylallyl)-L-Trp-6a-(alpha,alpha-dimethylallyl)-L-Trp) + 2 diphosphate. Its pathway is alkaloid biosynthesis. Prenyltransferase; part of the gene cluster that mediates the biosynthesis of okaramine B, a prenylated indole alkaloid that possesses an unusual octacyclic ring system, including a four-membered azetidine ring and an eight-membered azocine ring, and that exhibits insecticidal activity against silkworm larvae. Within the pathway, okaC performs asymmetric reverse prenylation of cyclo(L-Trp-L-Trp) at N-1 and C-2' of the indole ring to produce the cyclic prenylated tryptophan dimer cyclo(N8-(alpha,alpha-dimethylallyl)-L-Trp-6a-(alpha,alpha-dime-thylallyl)-L-Trp). The biosynthesis begins with the NRPS okaA that condenses two tryptophan molecules into cyclo(L-Trp-L-Trp). Prenylation by the prenyltransferase okaC then leads to the formation of cyclo(N8-(alpha,alpha-dimethylallyl)-L-Trp-6a-(alpha,alpha-dime-thylallyl)-L-Trp). This is followed by indole 2,3-epoxidation by the FAD-dependent monooxygenase okaB to facilitate the formation of the hexahydropyrrolo[2,3-b]indole (HPI) moiety of okaramine C. The cytochrome P450 monooxygenase okaD then likely catalyzes formation of the eight-membered ring of okaramine A. The dioxygenase okaE further forms the unusual 2-dimethyl-3-methyl-azetidine ring to yield 12-deshydroxyl okaramine E, as well as the hydroxylation of 12-deshydroxyl okaramine E to produce okaramine E. The cytochrome P450 monoxygenase okaG converts 12-deshydroxyl okaramine E into 3-desmethyl okaramine B which is further methylated by the methyltransferase okaF into okaramine B. In a shunt pathway, okaG and okaF together are also able to convert okaramine E into okaramine D. Okaramine H is produced by nonenzymatic conversion from okaramine A. This Penicillium ochrochloron protein is Prenyltransferase okaC.